The sequence spans 550 residues: Chaperonin GroEL (550 aa).

ATP contacts are provided by residues 30–33, K51, 87–91, G415, 479–481, and D495; these read TLGP, DGTTT, and NAA. A disordered region spans residues 525–550; that stretch reads PKDEKSSSELNSAPGNGMGGGMGGMM. Positions 540–550 are enriched in gly residues; it reads NGMGGGMGGMM.

The protein belongs to the chaperonin (HSP60) family. As to quaternary structure, forms a cylinder of 14 subunits composed of two heptameric rings stacked back-to-back. Interacts with the co-chaperonin GroES.

Its subcellular location is the cytoplasm. It carries out the reaction ATP + H2O + a folded polypeptide = ADP + phosphate + an unfolded polypeptide.. Its function is as follows. Together with its co-chaperonin GroES, plays an essential role in assisting protein folding. The GroEL-GroES system forms a nano-cage that allows encapsulation of the non-native substrate proteins and provides a physical environment optimized to promote and accelerate protein folding. This chain is Chaperonin GroEL, found in Buchnera aphidicola subsp. Cinara cedri (strain Cc).